Reading from the N-terminus, the 159-residue chain is 18.0 kDa class I heat shock protein (159 aa).

The sHSP domain maps to 45–159 (ETAAFANTHI…PEVKSIHISG (115 aa)).

This sequence belongs to the small heat shock protein (HSP20) family. Forms oligomeric structures.

Its subcellular location is the cytoplasm. In Daucus carota (Wild carrot), this protein is 18.0 kDa class I heat shock protein.